The sequence spans 231 residues: MSQPRQTRTFVRREGRLTQGQQRALEGLWPQFGVDVPERGVIDLDGLFGRAAPRVLDIGFGDGEALVEMAAADPERDYLGVEVHRPGVGHCLLCAEQAGLDNLRVATVDAVELVRHHLPGPSLETVQIFFPDPWPKKRHHKRRIIQPAFLDLLAERLVPGGALHLATDWADYAEWMLDTLEADARFENTCGPRAFVPPPPPRPQTKFERRGLRKGHQVHDLIYRLRPDTAG.

S-adenosyl-L-methionine is bound by residues aspartate 57, glutamate 82, aspartate 109, and aspartate 132. The active site involves aspartate 132. Substrate-binding positions include lysine 136, aspartate 168, and 205 to 208 (TKFE). The tract at residues 194–214 (AFVPPPPPRPQTKFERRGLRK) is disordered.

It belongs to the class I-like SAM-binding methyltransferase superfamily. TrmB family.

The catalysed reaction is guanosine(46) in tRNA + S-adenosyl-L-methionine = N(7)-methylguanosine(46) in tRNA + S-adenosyl-L-homocysteine. It participates in tRNA modification; N(7)-methylguanine-tRNA biosynthesis. Catalyzes the formation of N(7)-methylguanine at position 46 (m7G46) in tRNA. The polypeptide is tRNA (guanine-N(7)-)-methyltransferase (Halorhodospira halophila (strain DSM 244 / SL1) (Ectothiorhodospira halophila (strain DSM 244 / SL1))).